The following is a 620-amino-acid chain: Protein translocase subunit SecD (620 aa).

6 consecutive transmembrane segments (helical) span residues 10-30, 464-484, 488-507, 511-533, 555-575, and 582-602; these read YLLI…NLYP, LWGM…FGVI, ALAF…GATL, GIAG…FSRI, FTAI…LYAM, and GFAV…IMVT.

It belongs to the SecD/SecF family. SecD subfamily. As to quaternary structure, forms a complex with SecF. Part of the essential Sec protein translocation apparatus which comprises SecA, SecYEG and auxiliary proteins SecDF-YajC and YidC.

The protein resides in the cell inner membrane. Functionally, part of the Sec protein translocase complex. Interacts with the SecYEG preprotein conducting channel. SecDF uses the proton motive force (PMF) to complete protein translocation after the ATP-dependent function of SecA. The protein is Protein translocase subunit SecD of Pseudomonas aeruginosa (strain ATCC 15692 / DSM 22644 / CIP 104116 / JCM 14847 / LMG 12228 / 1C / PRS 101 / PAO1).